We begin with the raw amino-acid sequence, 490 residues long: tRNA modification GTPase MnmE (490 aa).

3 residues coordinate (6S)-5-formyl-5,6,7,8-tetrahydrofolate: Arg-23, Glu-80, and Lys-133. Residues 229–412 (GIEVVIAGQP…LRRILLEVAG (184 aa)) form the TrmE-type G domain. Residue Asn-239 coordinates K(+). GTP contacts are provided by residues 239–244 (NAGKSS), 258–264 (TPVAGTT), and 283–286 (DTAG). Ser-243 serves as a coordination point for Mg(2+). K(+) contacts are provided by Thr-258, Val-260, and Thr-263. A Mg(2+)-binding site is contributed by Thr-264. Residues 366–382 (PTAPTESAAVPPASARP) are compositionally biased toward low complexity. Positions 366 to 388 (PTAPTESAAVPPASARPAPAPRP) are disordered. 393-395 (SAR) provides a ligand contact to GTP. Residue Lys-490 coordinates (6S)-5-formyl-5,6,7,8-tetrahydrofolate.

It belongs to the TRAFAC class TrmE-Era-EngA-EngB-Septin-like GTPase superfamily. TrmE GTPase family. As to quaternary structure, homodimer. Heterotetramer of two MnmE and two MnmG subunits. K(+) serves as cofactor.

Its subcellular location is the cytoplasm. Functionally, exhibits a very high intrinsic GTPase hydrolysis rate. Involved in the addition of a carboxymethylaminomethyl (cmnm) group at the wobble position (U34) of certain tRNAs, forming tRNA-cmnm(5)s(2)U34. This is tRNA modification GTPase MnmE from Verminephrobacter eiseniae (strain EF01-2).